The sequence spans 225 residues: Ribose-5-phosphate isomerase A (225 aa).

Residues 27–30, 82–85, and 95–98 each bind substrate; these read SGST, DGAD, and KGGG. Glu-104 serves as the catalytic Proton acceptor. Lys-122 provides a ligand contact to substrate.

It belongs to the ribose 5-phosphate isomerase family. In terms of assembly, homodimer.

The catalysed reaction is aldehydo-D-ribose 5-phosphate = D-ribulose 5-phosphate. It participates in carbohydrate degradation; pentose phosphate pathway; D-ribose 5-phosphate from D-ribulose 5-phosphate (non-oxidative stage): step 1/1. In terms of biological role, catalyzes the reversible conversion of ribose-5-phosphate to ribulose 5-phosphate. The polypeptide is Ribose-5-phosphate isomerase A (Archaeoglobus fulgidus (strain ATCC 49558 / DSM 4304 / JCM 9628 / NBRC 100126 / VC-16)).